The sequence spans 449 residues: C4-dicarboxylate transport protein 1 (449 aa).

8 helical membrane-spanning segments follow: residues 16 to 38, 53 to 71, 84 to 106, 157 to 176, 197 to 219, 229 to 251, 311 to 333, and 358 to 380; these read FLQV…DLAV, MLIA…SGAG, VIYF…YSLG, ILQV…LVGE, GMIV…ARYG, LVLV…VLRL, GFSI…PLAM, and LVIL…VLVL.

This sequence belongs to the dicarboxylate/amino acid:cation symporter (DAACS) (TC 2.A.23) family.

The protein localises to the cell inner membrane. Functionally, responsible for the transport of dicarboxylates such as succinate, fumarate, and malate from the periplasm across the membrane. The polypeptide is C4-dicarboxylate transport protein 1 (dctA1) (Pseudomonas aeruginosa (strain ATCC 15692 / DSM 22644 / CIP 104116 / JCM 14847 / LMG 12228 / 1C / PRS 101 / PAO1)).